The chain runs to 136 residues: Small ribosomal subunit protein uS8 (136 aa).

The protein belongs to the universal ribosomal protein uS8 family. In terms of assembly, part of the 30S ribosomal subunit. Contacts proteins S5 and S12.

In terms of biological role, one of the primary rRNA binding proteins, it binds directly to 16S rRNA central domain where it helps coordinate assembly of the platform of the 30S subunit. In Frankia alni (strain DSM 45986 / CECT 9034 / ACN14a), this protein is Small ribosomal subunit protein uS8.